A 356-amino-acid polypeptide reads, in one-letter code: Phospho-N-acetylmuramoyl-pentapeptide-transferase (356 aa).

Helical transmembrane passes span 25–45, 70–90, 93–113, 138–158, 164–184, 195–215, 235–255, 258–278, 284–304, and 333–353; these read TVAAMLTSGLIVFLFGPSIIA, GTPTMGGLMILTGIVVSAFLW, LSNIYFWVSLFVMLSFGMIGF, FLIAIIAAFVLLQVGSSGLAL, YFINLSWFFLPFSAFVIVGTG, GLAIVPVMVAALSFALIAYLS, LAVLLGAVVGAGLGFLWFNAP, AIFMGDTGSLALGGLLGIVAV, IVLALIGGLFVLEGFSVVIQV, and QVVIRFWIISIVLALVGLSTL.

Belongs to the glycosyltransferase 4 family. MraY subfamily. Mg(2+) is required as a cofactor.

Its subcellular location is the cell inner membrane. The enzyme catalyses UDP-N-acetyl-alpha-D-muramoyl-L-alanyl-gamma-D-glutamyl-meso-2,6-diaminopimeloyl-D-alanyl-D-alanine + di-trans,octa-cis-undecaprenyl phosphate = di-trans,octa-cis-undecaprenyl diphospho-N-acetyl-alpha-D-muramoyl-L-alanyl-D-glutamyl-meso-2,6-diaminopimeloyl-D-alanyl-D-alanine + UMP. It functions in the pathway cell wall biogenesis; peptidoglycan biosynthesis. Functionally, catalyzes the initial step of the lipid cycle reactions in the biosynthesis of the cell wall peptidoglycan: transfers peptidoglycan precursor phospho-MurNAc-pentapeptide from UDP-MurNAc-pentapeptide onto the lipid carrier undecaprenyl phosphate, yielding undecaprenyl-pyrophosphoryl-MurNAc-pentapeptide, known as lipid I. This chain is Phospho-N-acetylmuramoyl-pentapeptide-transferase, found in Bartonella quintana (strain Toulouse) (Rochalimaea quintana).